The following is a 183-amino-acid chain: MSPERRPADIRRATEADMPAVCTIVNHYIETSTVNFRTEPQEPQEWTDDLVRLRERYPWLVAEVDGEVAGIAYAGPWKARNAYDWTAESTVYVSPRHQRTGLGSTLYTHLLKSLEAQGFKSVVAVIGLPNDPSVRMHEALGYAPRGMLRAAGFKHGNWHDVGFWQLDFSLPVPPRPVLPVTEI.

An N-acetyltransferase domain is found at 8-173; it reads ADIRRATEAD…WQLDFSLPVP (166 aa). Acetyl-CoA-binding positions include 91–93, 99–104, and N130; these read VYV and RTGLGS.

It belongs to the acetyltransferase family. PAT/BAR subfamily.

It carries out the reaction phosphinothricin + acetyl-CoA = N-acetylphosphinothricin + CoA + H(+). Its function is as follows. Inactivates phosphinothricin (PPT) by transfer of an acetyl group from acetyl CoA. Can also acetylate demethylphosphinothricin but not PTT or glutamate. This enzyme is an effector of phosphinothricin tripeptide (PTT or bialaphos) resistance. This is Phosphinothricin N-acetyltransferase from Streptomyces hygroscopicus.